The primary structure comprises 309 residues: uncharacterized protein (309 aa).

Positions 1-60 constitute an HTH lysR-type domain; sequence MKPLLDVLMILDALEKEGSFAAASAKLYKTPSALSYTVHKLESDLNIQLLDRSGHRAKFT. Positions 20 to 39 form a DNA-binding region, H-T-H motif; the sequence is FAAASAKLYKTPSALSYTVH.

Belongs to the LysR transcriptional regulatory family.

This is an uncharacterized protein from Escherichia coli (strain K12).